We begin with the raw amino-acid sequence, 119 residues long: UPF0102 protein Nmul_A0195 (119 aa).

This sequence belongs to the UPF0102 family.

In Nitrosospira multiformis (strain ATCC 25196 / NCIMB 11849 / C 71), this protein is UPF0102 protein Nmul_A0195.